A 272-amino-acid chain; its full sequence is Tropinone reductase-like 1 (272 aa).

17-41 (IITGGASGIGACTAELFHENGAKVV) contacts NAD(+). Substrate is bound at residue Ser-150. The Proton acceptor role is filled by Tyr-163.

Belongs to the short-chain dehydrogenases/reductases (SDR) family.

In terms of biological role, has no tropinone reductase activity. The sequence is that of Tropinone reductase-like 1 from Erythroxylum coca (Coca plant).